Here is a 574-residue protein sequence, read N- to C-terminus: 2-succinyl-5-enolpyruvyl-6-hydroxy-3-cyclohexene-1-carboxylate synthase (574 aa).

Belongs to the TPP enzyme family. MenD subfamily. Homodimer. It depends on Mg(2+) as a cofactor. Mn(2+) is required as a cofactor. Requires thiamine diphosphate as cofactor.

It catalyses the reaction isochorismate + 2-oxoglutarate + H(+) = 5-enolpyruvoyl-6-hydroxy-2-succinyl-cyclohex-3-ene-1-carboxylate + CO2. It functions in the pathway quinol/quinone metabolism; 1,4-dihydroxy-2-naphthoate biosynthesis; 1,4-dihydroxy-2-naphthoate from chorismate: step 2/7. The protein operates within quinol/quinone metabolism; menaquinone biosynthesis. In terms of biological role, catalyzes the thiamine diphosphate-dependent decarboxylation of 2-oxoglutarate and the subsequent addition of the resulting succinic semialdehyde-thiamine pyrophosphate anion to isochorismate to yield 2-succinyl-5-enolpyruvyl-6-hydroxy-3-cyclohexene-1-carboxylate (SEPHCHC). In Rubrobacter xylanophilus (strain DSM 9941 / JCM 11954 / NBRC 16129 / PRD-1), this protein is 2-succinyl-5-enolpyruvyl-6-hydroxy-3-cyclohexene-1-carboxylate synthase.